The following is a 203-amino-acid chain: V-type ATP synthase subunit D (203 aa).

This sequence belongs to the V-ATPase D subunit family.

In terms of biological role, produces ATP from ADP in the presence of a proton gradient across the membrane. The sequence is that of V-type ATP synthase subunit D from Thermotoga neapolitana (strain ATCC 49049 / DSM 4359 / NBRC 107923 / NS-E).